A 205-amino-acid chain; its full sequence is MSRYRGPRLKIVRKLGDLPGLTSKINKNLQLAEQNKGKKSTKTKLSQYGIRLQEKQKLKYNYGVTEKQLLLYIRKARTIKGSTGQMLLQYLEMRLDNTVFRLGLAPTIAGARQLVNHGHIMVNNRIVTIPSYKCKPKDILSIRNNNKSRNLVLNNLASPSVSKIPNHLLLKKDTLTATVNGIVERKSIPLEINELLVVEYYSRQT.

The 64-residue stretch at 93 to 156 (MRLDNTVFRL…KSRNLVLNNL (64 aa)) folds into the S4 RNA-binding domain.

Belongs to the universal ribosomal protein uS4 family. As to quaternary structure, part of the 30S ribosomal subunit. Contacts protein S5. The interaction surface between S4 and S5 is involved in control of translational fidelity.

The protein localises to the plastid. It is found in the chloroplast. One of the primary rRNA binding proteins, it binds directly to 16S rRNA where it nucleates assembly of the body of the 30S subunit. In terms of biological role, with S5 and S12 plays an important role in translational accuracy. The sequence is that of Small ribosomal subunit protein uS4c (rps4) from Mesostigma viride (Green alga).